The primary structure comprises 325 residues: Beta-ketoacyl-[acyl-carrier-protein] synthase III (325 aa).

Active-site residues include cysteine 119 and histidine 252. An ACP-binding region spans residues 253–257 (QANIR). Asparagine 282 is a catalytic residue.

This sequence belongs to the thiolase-like superfamily. FabH family. Homodimer.

It localises to the cytoplasm. It catalyses the reaction malonyl-[ACP] + acetyl-CoA + H(+) = 3-oxobutanoyl-[ACP] + CO2 + CoA. It functions in the pathway lipid metabolism; fatty acid biosynthesis. In terms of biological role, catalyzes the condensation reaction of fatty acid synthesis by the addition to an acyl acceptor of two carbons from malonyl-ACP. Catalyzes the first condensation reaction which initiates fatty acid synthesis and may therefore play a role in governing the total rate of fatty acid production. Possesses both acetoacetyl-ACP synthase and acetyl transacylase activities. Its substrate specificity determines the biosynthesis of branched-chain and/or straight-chain of fatty acids. This chain is Beta-ketoacyl-[acyl-carrier-protein] synthase III, found in Paracidovorax citrulli (strain AAC00-1) (Acidovorax citrulli).